The sequence spans 1892 residues: Protein TIC 214 (1892 aa).

A run of 6 helical transmembrane segments spans residues 18–38 (IINSVVVVGLYYGFLTTFSIG), 64–84 (FITGQLMMFISIYYAPLHLAL), 87–107 (PHTITVLALPYLLFHFFWNNH), 124–144 (LSIQCVFLNNLIFQLFNHFIL), 172–192 (VGWLIGHIFFMKWLGLVLVWI), and 221–241 (IFSILLFITCVYYLGRIPSPI). 3 disordered regions span residues 250 to 300 (SKTE…EGWD), 794 to 814 (REEQTKREEKKEKDKKGENKR), and 1581 to 1609 (RIQEEKEPASQGEKERGSDIENKGNLGPV). A compositionally biased stretch (acidic residues) spans 256–268 (VESEEEKDVEIET). The segment covering 1581–1602 (RIQEEKEPASQGEKERGSDIEN) has biased composition (basic and acidic residues).

This sequence belongs to the TIC214 family. As to quaternary structure, part of the Tic complex.

It localises to the plastid. The protein localises to the chloroplast inner membrane. In terms of biological role, involved in protein precursor import into chloroplasts. May be part of an intermediate translocation complex acting as a protein-conducting channel at the inner envelope. In Nicotiana tomentosiformis (Tobacco), this protein is Protein TIC 214.